A 394-amino-acid chain; its full sequence is Exodeoxyribonuclease 7 large subunit (394 aa).

It belongs to the XseA family. As to quaternary structure, heterooligomer composed of large and small subunits.

Its subcellular location is the cytoplasm. It carries out the reaction Exonucleolytic cleavage in either 5'- to 3'- or 3'- to 5'-direction to yield nucleoside 5'-phosphates.. Bidirectionally degrades single-stranded DNA into large acid-insoluble oligonucleotides, which are then degraded further into small acid-soluble oligonucleotides. This chain is Exodeoxyribonuclease 7 large subunit, found in Thermotoga maritima (strain ATCC 43589 / DSM 3109 / JCM 10099 / NBRC 100826 / MSB8).